We begin with the raw amino-acid sequence, 333 residues long: Protein-methionine-sulfoxide reductase catalytic subunit MsrP (333 aa).

The segment at residues 1–43 (MHKHRKPTEADVTPESLFYQRRRILKALGISAAALSLPFSAQA) is a signal peptide (tat-type signal). Mo-molybdopterin is bound by residues Asn-87, 90–91 (YE), Cys-145, Thr-180, Asn-232, Arg-237, and 248–250 (NIK).

It belongs to the MsrP family. As to quaternary structure, heterodimer of a catalytic subunit (MsrP) and a heme-binding subunit (MsrQ). It depends on Mo-molybdopterin as a cofactor. Predicted to be exported by the Tat system. The position of the signal peptide cleavage has not been experimentally proven.

It localises to the periplasm. It carries out the reaction L-methionyl-[protein] + a quinone + H2O = L-methionyl-(S)-S-oxide-[protein] + a quinol. The enzyme catalyses L-methionyl-[protein] + a quinone + H2O = L-methionyl-(R)-S-oxide-[protein] + a quinol. Part of the MsrPQ system that repairs oxidized periplasmic proteins containing methionine sulfoxide residues (Met-O), using respiratory chain electrons. Thus protects these proteins from oxidative-stress damage caused by reactive species of oxygen and chlorine generated by the host defense mechanisms. MsrPQ is essential for the maintenance of envelope integrity under bleach stress, rescuing a wide series of structurally unrelated periplasmic proteins from methionine oxidation. The catalytic subunit MsrP is non-stereospecific, being able to reduce both (R-) and (S-) diastereoisomers of methionine sulfoxide. The chain is Protein-methionine-sulfoxide reductase catalytic subunit MsrP from Pectobacterium carotovorum subsp. carotovorum (strain PC1).